Here is a 1024-residue protein sequence, read N- to C-terminus: Eukaryotic translation initiation factor 3 subunit A (1024 aa).

The PCI domain occupies 331–508; it reads VISSNAPGTG…QAITFQDDVF (178 aa). Coiled-coil stretches lie at residues 575-717 and 777-889; these read AAED…REEA and KRRG…RRSR. Basic and acidic residues-rich tracts occupy residues 797 to 866 and 873 to 886; these read KERR…ERRA and DKQR…EANR. Disordered regions lie at residues 797–973 and 1001–1024; these read KERR…GAYR and AAAA…GRRA. Low complexity-rich tracts occupy residues 890-906 and 946-971; these read AAGT…AADA and KEAA…SSGA.

The protein belongs to the eIF-3 subunit A family. In terms of assembly, component of the eukaryotic translation initiation factor 3 (eIF-3) complex.

The protein localises to the cytoplasm. Functionally, RNA-binding component of the eukaryotic translation initiation factor 3 (eIF-3) complex, which is involved in protein synthesis of a specialized repertoire of mRNAs and, together with other initiation factors, stimulates binding of mRNA and methionyl-tRNAi to the 40S ribosome. The eIF-3 complex specifically targets and initiates translation of a subset of mRNAs involved in cell proliferation. This chain is Eukaryotic translation initiation factor 3 subunit A, found in Mycosarcoma maydis (Corn smut fungus).